The sequence spans 103 residues: Non-histone chromosomal protein 6 (103 aa).

2 disordered regions span residues 1-30 (MPKA…KRGL) and 70-103 (KQRA…EESS). A DNA-binding region (HMG box) is located at residues 26-94 (PKRGLSAYMF…RYEDEKQAYN (69 aa)). Over residues 70-91 (KQRAPYEAKAAADKKRYEDEKQ) the composition is skewed to basic and acidic residues.

Belongs to the NHP6 family. Weakly associates with the stable heterodimer of ctc-1/pob3 and ctc-2/spt16 to form the FACT complex.

It localises to the nucleus. It is found in the chromosome. Its function is as follows. DNA-binding protein that induces severe bending of DNA. Required for DNA-binding by the FACT complex, a general chromatin factor that acts to reorganize nucleosomes. The FACT complex is involved in multiple processes that require DNA as a template such as mRNA elongation, DNA replication and DNA repair. Also augments the fidelity of transcription by RNA polymerase III independently of any role in the FACT complex. The polypeptide is Non-histone chromosomal protein 6 (nhp-1) (Neurospora crassa (strain ATCC 24698 / 74-OR23-1A / CBS 708.71 / DSM 1257 / FGSC 987)).